We begin with the raw amino-acid sequence, 442 residues long: F-box protein KIB2 (442 aa).

The 48-residue stretch at 62-109 folds into the F-box domain; it reads SKQPVLVLDLLRSILERLSFVDFHRGRCISLEWYSASESCLAVKNPTS. A Nuclear localization signal motif is present at residues 236 to 243; the sequence is HKKGDENY.

As to quaternary structure, interacts with ASK7/BIN2/SK21.

The protein resides in the cytoplasm. The protein localises to the nucleus. It localises to the nucleolus. Component of SCF(ASK-cullin-F-box) E3 ubiquitin ligase complexes, which may mediate the ubiquitination and subsequent proteasomal degradation of target proteins. Required for brassinosteroid (BR) signal transduction. Mediates ASK7/BIN2/SK21 inactivation both by competing with substrate binding (e.g. BZR1) and by promoting its ubiquitination and subsequent proteasomal degradation. This chain is F-box protein KIB2, found in Arabidopsis thaliana (Mouse-ear cress).